The following is a 108-amino-acid chain: Small ribosomal subunit protein uS10 (108 aa).

The protein belongs to the universal ribosomal protein uS10 family. Part of the 30S ribosomal subunit.

Involved in the binding of tRNA to the ribosomes. This Rhodopirellula baltica (strain DSM 10527 / NCIMB 13988 / SH1) protein is Small ribosomal subunit protein uS10.